Reading from the N-terminus, the 727-residue chain is Non-structural protein 4 (727 aa).

2 disordered regions span residues 1–38 (MNQSRSFVTGRGRDLSRTPSALSSNSETPGSMSSPSEG) and 673–727 (SMTL…KLSK). Residues 17-38 (RTPSALSSNSETPGSMSSPSEG) are compositionally biased toward polar residues. The segment covering 712-727 (SRRKARKARAASKLSK) has biased composition (basic residues).

The sequence is that of Non-structural protein 4 from Rice dwarf virus (isolate Akita) (RDV).